A 438-amino-acid chain; its full sequence is tRNA-2-methylthio-N(6)-dimethylallyladenosine synthase (438 aa).

The MTTase N-terminal domain maps to 3-123 (KRLFVKTYGC…LPEMVAQAAR (121 aa)). C12, C48, C86, C160, C164, and C167 together coordinate [4Fe-4S] cluster. Residues 146–374 (HAEGTSAFLS…QALLLDQTMR (229 aa)) enclose the Radical SAM core domain. The TRAM domain maps to 377–438 (HACVGREMRI…HPNSLEAVPA (62 aa)).

It belongs to the methylthiotransferase family. MiaB subfamily. As to quaternary structure, monomer. Requires [4Fe-4S] cluster as cofactor.

It localises to the cytoplasm. It carries out the reaction N(6)-dimethylallyladenosine(37) in tRNA + (sulfur carrier)-SH + AH2 + 2 S-adenosyl-L-methionine = 2-methylsulfanyl-N(6)-dimethylallyladenosine(37) in tRNA + (sulfur carrier)-H + 5'-deoxyadenosine + L-methionine + A + S-adenosyl-L-homocysteine + 2 H(+). In terms of biological role, catalyzes the methylthiolation of N6-(dimethylallyl)adenosine (i(6)A), leading to the formation of 2-methylthio-N6-(dimethylallyl)adenosine (ms(2)i(6)A) at position 37 in tRNAs that read codons beginning with uridine. The sequence is that of tRNA-2-methylthio-N(6)-dimethylallyladenosine synthase from Paramagnetospirillum magneticum (strain ATCC 700264 / AMB-1) (Magnetospirillum magneticum).